We begin with the raw amino-acid sequence, 527 residues long: Lysine--tRNA ligase (527 aa).

E431 and E438 together coordinate Mg(2+).

The protein belongs to the class-II aminoacyl-tRNA synthetase family. Homodimer. Mg(2+) is required as a cofactor.

Its subcellular location is the cytoplasm. The catalysed reaction is tRNA(Lys) + L-lysine + ATP = L-lysyl-tRNA(Lys) + AMP + diphosphate. This is Lysine--tRNA ligase (lysS) from Chlamydia pneumoniae (Chlamydophila pneumoniae).